A 441-amino-acid chain; its full sequence is Probable xylan O-acetyltransferase 10 (441 aa).

The Cytoplasmic segment spans residues 1-19 (MMKPQHGGMAGHGGGRTRS). The helical; Signal-anchor for type II membrane protein transmembrane segment at 20-40 (PFLTSYALTLAFITFVSVLYF) threads the bilayer. Topologically, residues 41–441 (KDFSSTLHQP…ELLYSKLFFP (401 aa)) are lumenal. Residues 50-81 (PFLTRPPPHRRQIARPRAPSHHHGGGSSSGGG) form a disordered region. The span at 56–73 (PPHRRQIARPRAPSHHHG) shows a compositional bias: basic residues. 4 cysteine pairs are disulfide-bonded: C97/C148, C119/C184, C128/C422, and C341/C418. Residue N154 is glycosylated (N-linked (GlcNAc...) asparagine). Positions 171–173 (GDS) match the GDS motif motif. S173 (nucleophile) is an active-site residue. N-linked (GlcNAc...) asparagine glycosylation is found at N212, N343, and N381. The Proton donor role is filled by D417. The DXXH motif motif lies at 417 to 420 (DCTH). Residue H420 is the Proton acceptor of the active site.

The protein belongs to the PC-esterase family. TBL subfamily. As to expression, expressed in roots, leaves and stems.

Its subcellular location is the golgi apparatus membrane. Its function is as follows. Probable xylan acetyltransferase required for 2-O- and 3-O-monoacetylation of xylosyl residues in xylan. Possesses extremely low activity in vitro. The polypeptide is Probable xylan O-acetyltransferase 10 (Oryza sativa subsp. japonica (Rice)).